The primary structure comprises 24 residues: Brevinin-1GRa (24 aa).

As to expression, expressed by the skin glands.

It localises to the secreted. In terms of biological role, antimicrobial peptide active against the Gram-positive bacterium S.aureus (MIC=12.5 uM) and against the Gram-negative bacteria E.coli (MIC=25 uM). This chain is Brevinin-1GRa, found in Odorrana grahami (Yunnanfu frog).